Reading from the N-terminus, the 458-residue chain is tRNA modification GTPase MnmE (458 aa).

The (6S)-5-formyl-5,6,7,8-tetrahydrofolate site is built by Arg-26, Glu-88, and Arg-127. A TrmE-type G domain is found at 224-378 (GLSTAIIGRP…IEDRINQLFF (155 aa)). Residue Asn-234 coordinates K(+). Residues 234–239 (NVGKSS), 253–259 (TDIAGTT), and 278–281 (DTAG) contribute to the GTP site. Ser-238 provides a ligand contact to Mg(2+). Residues Thr-253, Ile-255, and Thr-258 each coordinate K(+). Position 259 (Thr-259) interacts with Mg(2+). Lys-458 is a binding site for (6S)-5-formyl-5,6,7,8-tetrahydrofolate.

The protein belongs to the TRAFAC class TrmE-Era-EngA-EngB-Septin-like GTPase superfamily. TrmE GTPase family. As to quaternary structure, homodimer. Heterotetramer of two MnmE and two MnmG subunits. K(+) is required as a cofactor.

The protein resides in the cytoplasm. In terms of biological role, exhibits a very high intrinsic GTPase hydrolysis rate. Involved in the addition of a carboxymethylaminomethyl (cmnm) group at the wobble position (U34) of certain tRNAs, forming tRNA-cmnm(5)s(2)U34. The sequence is that of tRNA modification GTPase MnmE from Streptococcus pyogenes serotype M28 (strain MGAS6180).